Consider the following 260-residue polypeptide: Snake venom serine protease KN6 (260 aa).

The N-terminal stretch at Met1–Ala18 is a signal peptide. Positions Gln19–Leu24 are excised as a propeptide. Positions Val25 to Ala251 constitute a Peptidase S1 domain. Cystine bridges form between Cys31–Cys165, Cys100–Cys258, Cys144–Cys212, Cys176–Cys191, and Cys202–Cys227. The active-site Charge relay system is the His67. Asn105 carries an N-linked (GlcNAc...) asparagine glycan. The active-site Charge relay system is the Asp112. A glycan (N-linked (GlcNAc...) asparagine) is linked at Asn172. Catalysis depends on Ser206, which acts as the Charge relay system. Asn213 and Asn255 each carry an N-linked (GlcNAc...) asparagine glycan.

It belongs to the peptidase S1 family. Snake venom subfamily. In terms of assembly, monomer. Expressed by the venom gland.

It is found in the secreted. In terms of biological role, snake venom serine protease that may act in the hemostasis system of the prey. This is Snake venom serine protease KN6 from Trimeresurus stejnegeri (Chinese green tree viper).